Reading from the N-terminus, the 116-residue chain is Selenoprotein H (116 aa).

An N6-acetyllysine modification is found at Lys-20. The segment at residues 35–38 (CTSU) is a cross-link (cysteinyl-selenocysteine (Cys-Sec); redox-active). Position 38 (Sec-38) is a non-standard amino acid, selenocysteine.

This sequence belongs to the SelWTH family.

In terms of biological role, may be involved in a redox-related process. This is Selenoprotein H from Mus musculus (Mouse).